The primary structure comprises 523 residues: GMP synthase [glutamine-hydrolyzing] (523 aa).

The Glutamine amidotransferase type-1 domain occupies 8–205; the sequence is KILILDFGSQ…VVNICGCETK (198 aa). C85 acts as the Nucleophile in catalysis. Catalysis depends on residues H179 and E181. A GMPS ATP-PPase domain is found at 206-398; sequence WTAENIIEDA…LGLPAEMINR (193 aa). 233-239 serves as a coordination point for ATP; it reads SGGVDSS.

Homodimer.

The catalysed reaction is XMP + L-glutamine + ATP + H2O = GMP + L-glutamate + AMP + diphosphate + 2 H(+). Its pathway is purine metabolism; GMP biosynthesis; GMP from XMP (L-Gln route): step 1/1. Catalyzes the synthesis of GMP from XMP. The protein is GMP synthase [glutamine-hydrolyzing] of Haemophilus influenzae (strain PittGG).